A 722-amino-acid polypeptide reads, in one-letter code: D-galactosyl-beta-1-&gt;4-L-rhamnose phosphorylase (722 aa).

The Proton donor role is filled by Asp-319.

It belongs to the glycoside hydrolase 112 family.

It carries out the reaction beta-D-galactosyl-(1-&gt;4)-L-rhamnose + phosphate = alpha-D-galactose 1-phosphate + L-rhamnopyranose. Reversibly phosphorolyzes beta-D-galactosyl-(1-&gt;4)-L-rhamnose to form alpha-D-galactose 1-phosphate and L-rhamnose. Does not phosphorolyze galacto-N-biose or lacto-N-biose. In the reverse reaction, has the highest activity toward L-rhamnose, also has activity toward L-mannose, and low activity toward L-lyxose, D-glucose, 2-deoxy-D-glucose and D-galactose. The chain is D-galactosyl-beta-1-&gt;4-L-rhamnose phosphorylase from Lachnoclostridium phytofermentans (strain ATCC 700394 / DSM 18823 / ISDg) (Clostridium phytofermentans).